The sequence spans 143 residues: Transcriptional regulator MraZ (143 aa).

SpoVT-AbrB domains lie at 5-47 (TYTP…PKEE) and 76-119 (ADEQ…DAQA).

This sequence belongs to the MraZ family. In terms of assembly, forms oligomers.

The protein resides in the cytoplasm. The protein localises to the nucleoid. The chain is Transcriptional regulator MraZ from Corynebacterium efficiens (strain DSM 44549 / YS-314 / AJ 12310 / JCM 11189 / NBRC 100395).